Here is a 321-residue protein sequence, read N- to C-terminus: MATH domain and coiled-coil domain-containing protein At3g58260 (321 aa).

An MATH domain is found at 6–135 (NNTFTWVIKN…NDEVMVAVAV (130 aa)). Positions 232–283 (KLDWLEKKLDELFEKKKEEADKIRMQNIEEELKDLRQKCSSLEALLKKEKTG) form a coiled coil.

This chain is MATH domain and coiled-coil domain-containing protein At3g58260, found in Arabidopsis thaliana (Mouse-ear cress).